Consider the following 1430-residue polypeptide: DNA-directed RNA polymerase subunit beta' (1430 aa).

4 residues coordinate Zn(2+): Cys70, Cys72, Cys85, and Cys88. 3 residues coordinate Mg(2+): Asp495, Asp497, and Asp499. The Zn(2+) site is built by Cys838, Cys912, Cys919, and Cys922.

It belongs to the RNA polymerase beta' chain family. In terms of assembly, the RNAP catalytic core consists of 2 alpha, 1 beta, 1 beta' and 1 omega subunit. When a sigma factor is associated with the core the holoenzyme is formed, which can initiate transcription. It depends on Mg(2+) as a cofactor. Zn(2+) serves as cofactor.

It carries out the reaction RNA(n) + a ribonucleoside 5'-triphosphate = RNA(n+1) + diphosphate. DNA-dependent RNA polymerase catalyzes the transcription of DNA into RNA using the four ribonucleoside triphosphates as substrates. This Rhodospirillum centenum (strain ATCC 51521 / SW) protein is DNA-directed RNA polymerase subunit beta'.